The sequence spans 539 residues: 3-methylmercaptopropionyl-CoA ligase (539 aa).

Mg(2+) is bound at residue T185. ATP is bound by residues H231, G303, H324, A325, and S329. E330 is a Mg(2+) binding site. The ATP site is built by Q359, D417, R432, and K523.

The protein belongs to the ATP-dependent AMP-binding enzyme family. As to quaternary structure, homodimer. Mg(2+) serves as cofactor.

The enzyme catalyses 3-(methylsulfanyl)propanoate + ATP + CoA = 3-(methylsulfanyl)propanoyl-CoA + AMP + diphosphate. The protein operates within lipid metabolism; fatty acid metabolism. With respect to regulation, activated by LiCl and NH(4)Cl. Inhibited by dimethylsulfoniopropionate (DMSP). MMPA concentrations above 2 mM relieve the DMSP inhibition and 80% of activity is regained at an MMPA concentration of 8 mM. Involved in the assimilation of dimethylsulphoniopropionate (DMSP), an important compound in the fixation of carbon in marine phytoplankton. Catalyzes the ATP-dependent ligation of methylmercaptopropionate (MMPA) and CoA to yield methylmercaptopropionate-CoA (MMPA-CoA). It is also active with short-chain-fatty-acid (carboxylic acids up to six carbons in length). The chain is 3-methylmercaptopropionyl-CoA ligase from Ruegeria pomeroyi (strain ATCC 700808 / DSM 15171 / DSS-3) (Silicibacter pomeroyi).